A 592-amino-acid chain; its full sequence is Protein kinase C zeta type (592 aa).

The PB1 domain maps to 15–98 (RVRLKAHYGG…EVLIIHVFPS (84 aa)). The segment at 79–145 (AFRLACQGRD…KRFNRRAYCG (67 aa)) is interaction with SQSTM1. The Phorbol-ester/DAG-type zinc finger occupies 130–180 (GHLFQAKRFNRRAYCGQCSERIWGLARQGYRCINCKLLVHKRCHVLVPLTC). The Protein kinase domain occupies 252–518 (FDLIRVIGRG…FSDIKSHAFF (267 aa)). Residues 258–266 (IGRGSYAKV) and Lys281 each bind ATP. Asp376 serves as the catalytic Proton acceptor. The residue at position 410 (Thr410) is a Phosphothreonine; by PDPK1 and PI3K. An AGC-kinase C-terminal domain is found at 519–590 (RSIDWDLLEK…INPLLLSAEE (72 aa)). Thr560 bears the Phosphothreonine mark. Position 591 is a phosphoserine (Ser591).

Belongs to the protein kinase superfamily. AGC Ser/Thr protein kinase family. PKC subfamily. Interacts with PARD6A, PARD6B and PARD6G. Part of a complex with PARD3, PARD6A or PARD6B or PARD6G and CDC42 or RAC1. Interacts with ADAP1/CENTA1. Forms a ternary complex with SQSTM1 and KCNAB2. Forms another ternary complex with SQSTM1 and GABRR3. Forms a complex with SQSTM1 and MAP2K5. Interacts (via the protein kinase domain) with WWC1. Forms a tripartite complex with WWC1 and DDR1, but predominantly in the absence of collagen. Component of the Par polarity complex, composed of at least phosphorylated PRKCZ, PARD3 and TIAM1. Interacts with PDPK1 (via N-terminal region). Interacts with WDFY2 (via WD repeats 1-3). Interacts with VAMP2. Forms a complex with WDFY2 and VAMP2. Interacts with APPL1. Interacts with WWC1, WWC2 and WWC3. In terms of processing, CDH5 is required for its phosphorylation at Thr-410. Phosphorylated by protein kinase PDPK1; phosphorylation is inhibited by the apoptotic C-terminal cleavage product of PKN2. Phosphorylation at Thr-410 by PI3K activates the kinase. In terms of tissue distribution, isoform 1: In brain, expressed in hippocampus, neocortex and cerebellum (at protein level). Also expressed in lung, liver, kidney, testis and to a lesser extent in pancreas, intestine and skin (at protein level). Isoform 2: Specifically expressed in brain where it localizes to the hippocampus, neocortex and cerebellum (at protein level).

It localises to the cytoplasm. It is found in the endosome. The protein localises to the cell junction. The protein resides in the membrane. It carries out the reaction L-seryl-[protein] + ATP = O-phospho-L-seryl-[protein] + ADP + H(+). It catalyses the reaction L-threonyl-[protein] + ATP = O-phospho-L-threonyl-[protein] + ADP + H(+). Its activity is regulated as follows. Atypical PKCs (PRKCI and PRKCZ) exhibit an elevated basal enzymatic activity (that may be due to the interaction with SMG1 or SQSTM1) and are not regulated by diacylglycerol, phosphatidylserine, phorbol esters or calcium ions. Two specific sites, Thr-410 (activation loop of the kinase domain) and Thr-560 (turn motif), need to be phosphorylated for its full activation. Phosphatidylinositol 3,4,5-trisphosphate might be a physiological activator. Isoform 2: Constitutively active. In terms of biological role, calcium- and diacylglycerol-independent serine/threonine-protein kinase that functions in phosphatidylinositol 3-kinase (PI3K) pathway and mitogen-activated protein (MAP) kinase cascade, and is involved in NF-kappa-B activation, mitogenic signaling, cell proliferation, cell polarity, inflammatory response and maintenance of long-term potentiation (LTP). Upon lipopolysaccharide (LPS) treatment in macrophages, or following mitogenic stimuli, functions downstream of PI3K to activate MAP2K1/MEK1-MAPK1/ERK2 signaling cascade independently of RAF1 activation. Required for insulin-dependent activation of AKT3, but may function as an adapter rather than a direct activator. Upon insulin treatment may act as a downstream effector of PI3K and contribute to the activation of translocation of the glucose transporter SLC2A4/GLUT4 and subsequent glucose transport in adipocytes. In EGF-induced cells, binds and activates MAP2K5/MEK5-MAPK7/ERK5 independently of its kinase activity and can activate JUN promoter through MEF2C. Through binding with SQSTM1/p62, functions in interleukin-1 signaling and activation of NF-kappa-B with the specific adapters RIPK1 and TRAF6. Participates in TNF-dependent transactivation of NF-kappa-B by phosphorylating and activating IKBKB kinase, which in turn leads to the degradation of NF-kappa-B inhibitors. In migrating astrocytes, forms a cytoplasmic complex with PARD6A and is recruited by CDC42 to function in the establishment of cell polarity along with the microtubule motor and dynein. In association with FEZ1, stimulates neuronal differentiation in PC12 cells. In the inflammatory response, is required for the T-helper 2 (Th2) differentiation process, including interleukin production, efficient activation of JAK1 and the subsequent phosphorylation and nuclear translocation of STAT6. May be involved in development of allergic airway inflammation (asthma), a process dependent on Th2 immune response. In the NF-kappa-B-mediated inflammatory response, can relieve SETD6-dependent repression of NF-kappa-B target genes by phosphorylating the RELA subunit at 'Ser-311'. Phosphorylates VAMP2 in vitro. Phosphorylates and activates LRRK1, which phosphorylates RAB proteins involved in intracellular trafficking. Involved in late synaptic long term potentiation phase in CA1 hippocampal cells and long term memory maintenance. This chain is Protein kinase C zeta type (Prkcz), found in Rattus norvegicus (Rat).